Here is a 711-residue protein sequence, read N- to C-terminus: Ribosomal RNA large subunit methyltransferase K/L (711 aa).

Positions 42–153 (DAQRAVLWSR…KGRATISVDL (112 aa)) constitute a THUMP domain.

Belongs to the methyltransferase superfamily. RlmKL family.

Its subcellular location is the cytoplasm. It catalyses the reaction guanosine(2445) in 23S rRNA + S-adenosyl-L-methionine = N(2)-methylguanosine(2445) in 23S rRNA + S-adenosyl-L-homocysteine + H(+). It carries out the reaction guanosine(2069) in 23S rRNA + S-adenosyl-L-methionine = N(2)-methylguanosine(2069) in 23S rRNA + S-adenosyl-L-homocysteine + H(+). Functionally, specifically methylates the guanine in position 2445 (m2G2445) and the guanine in position 2069 (m7G2069) of 23S rRNA. The sequence is that of Ribosomal RNA large subunit methyltransferase K/L from Xanthomonas campestris pv. campestris (strain B100).